The following is a 712-amino-acid chain: Elongation factor G (712 aa).

In terms of domain architecture, tr-type G spans 8–290; sequence TRYRNIGISA…AVIEFLPSPT (283 aa). GTP-binding positions include 17–24, 88–92, and 142–145; these read AHIDAGKT, DTPGH, and NKMD.

Belongs to the TRAFAC class translation factor GTPase superfamily. Classic translation factor GTPase family. EF-G/EF-2 subfamily.

The protein resides in the cytoplasm. Functionally, catalyzes the GTP-dependent ribosomal translocation step during translation elongation. During this step, the ribosome changes from the pre-translocational (PRE) to the post-translocational (POST) state as the newly formed A-site-bound peptidyl-tRNA and P-site-bound deacylated tRNA move to the P and E sites, respectively. Catalyzes the coordinated movement of the two tRNA molecules, the mRNA and conformational changes in the ribosome. This is Elongation factor G from Acinetobacter baumannii (strain AB0057).